A 231-amino-acid polypeptide reads, in one-letter code: Orotidine 5'-phosphate decarboxylase (231 aa).

Substrate contacts are provided by residues D11, K33, 60–69 (DLKFHDIPNT), T120, R181, Q190, G210, and R211. K62 serves as the catalytic Proton donor.

The protein belongs to the OMP decarboxylase family. Type 1 subfamily. As to quaternary structure, homodimer.

The enzyme catalyses orotidine 5'-phosphate + H(+) = UMP + CO2. The protein operates within pyrimidine metabolism; UMP biosynthesis via de novo pathway; UMP from orotate: step 2/2. Functionally, catalyzes the decarboxylation of orotidine 5'-monophosphate (OMP) to uridine 5'-monophosphate (UMP). This is Orotidine 5'-phosphate decarboxylase from Vibrio cholerae serotype O1 (strain ATCC 39315 / El Tor Inaba N16961).